Here is a 148-residue protein sequence, read N- to C-terminus: Transcription antitermination protein NusB (148 aa).

It belongs to the NusB family.

In terms of biological role, involved in transcription antitermination. Required for transcription of ribosomal RNA (rRNA) genes. Binds specifically to the boxA antiterminator sequence of the ribosomal RNA (rrn) operons. This chain is Transcription antitermination protein NusB, found in Nitrosococcus oceani (strain ATCC 19707 / BCRC 17464 / JCM 30415 / NCIMB 11848 / C-107).